The following is a 532-amino-acid chain: 2,3-bisphosphoglycerate-independent phosphoglycerate mutase (532 aa).

Aspartate 15 and serine 65 together coordinate Mn(2+). Serine 65 (phosphoserine intermediate) is an active-site residue. Residues histidine 126, 156 to 157 (RD), arginine 188, arginine 194, 258 to 261 (RPDR), and lysine 331 contribute to the substrate site. Mn(2+)-binding residues include aspartate 398, histidine 402, aspartate 439, histidine 440, and histidine 457.

The protein belongs to the BPG-independent phosphoglycerate mutase family. As to quaternary structure, monomer. The cofactor is Mn(2+).

The enzyme catalyses (2R)-2-phosphoglycerate = (2R)-3-phosphoglycerate. It participates in carbohydrate degradation; glycolysis; pyruvate from D-glyceraldehyde 3-phosphate: step 3/5. Its function is as follows. Catalyzes the interconversion of 2-phosphoglycerate and 3-phosphoglycerate. This chain is 2,3-bisphosphoglycerate-independent phosphoglycerate mutase, found in Microcystis aeruginosa (strain NIES-843 / IAM M-2473).